A 1080-amino-acid polypeptide reads, in one-letter code: Ubiquitin carboxyl-terminal hydrolase 8 (1080 aa).

An MIT domain is found at 33 to 116 (TKNYIHSAQK…ESLKLRYEEA (84 aa)). Over residues 119–173 (RKQLEEKDRREEEQLQQQKRQEMGREDSGAAAKRSVENLLDSKTKTQRINGEKSE) the composition is skewed to basic and acidic residues. Positions 119–176 (RKQLEEKDRREEEQLQQQKRQEMGREDSGAAAKRSVENLLDSKTKTQRINGEKSEGAA) are disordered. The residue at position 160 (serine 160) is a Phosphoserine. The 119-residue stretch at 195 to 313 (KNTSLIIMDA…WLLCYPQFTT (119 aa)) folds into the Rhodanese domain. Positions 379–393 (ALAGPGAAPRAEASP) are enriched in low complexity. Disordered regions lie at residues 379–455 (ALAG…TDEE), 468–605 (EKNK…RSEE), and 642–710 (PPEM…KPPC). At serine 392 the chain carries Phosphoserine. The SH3-binding signature appears at 405–413 (PQVDRTKKP). Residues 417-427 (LPEDHRIKSEN) show a composition bias toward basic and acidic residues. Serine 446 carries the post-translational modification Phosphoserine. Composition is skewed to basic and acidic residues over residues 468–535 (EKNK…RELS), 549–577 (SKSE…KRPA), and 593–605 (AQRE…RSEE). Threonine 569 is modified (phosphothreonine). The segment covering 678-688 (SYSSPDITQAL) has biased composition (polar residues). Phosphoserine is present on residues serine 680 and serine 681. In terms of domain architecture, USP spans 739–1071 (TGLRNLGNTC…AAYILFYTSL (333 aa)). Cysteine 748 serves as the catalytic Nucleophile. Residue threonine 907 is modified to Phosphothreonine. Residue histidine 1029 is the Proton acceptor of the active site.

This sequence belongs to the peptidase C19 family. In terms of assembly, forms a ternary complex with RNF128 and OTUB1. Interacts (via C-terminal UCH catalytic domain) with OTUB1 isoform 1. Interacts with STAM2 (via SH3 domain). Interacts with DNAJB3, EGFR, EPS15, RASGRF1, RNF41, YWHAE, YWHAG and YWHAZ. Interacts with NBR1, RASGRF1, RNF41 and IST1. Associates with the ESCRT-0 complex and with microtubules. Interacts with BIRC6/bruce and KIF23/MKLP1. Post-translationally, phosphorylation of Ser-680 is essential for interaction with YWHAE and for cytosol localization. Undergoes dephosphorylation at Ser-680 in the M phase. Tyrosine-phosphorylated in its N-terminal half in an EGFR-dependent manner. Ubiquitinated. Inactive form is mostly monoubiquitinated, but polyubiquitination happens too. Ubiquitination is increased in EGF-stimulated cells. Ubiquitination of active form is undetectable, suggesting a possibility that USP8 deubiquitinates itself, thereby regulating its own function. Highly expressed in testis. Expressed at intermediate level in brain.

The protein localises to the cytoplasm. It localises to the nucleus. Its subcellular location is the endosome membrane. It is found in the cell membrane. It catalyses the reaction Thiol-dependent hydrolysis of ester, thioester, amide, peptide and isopeptide bonds formed by the C-terminal Gly of ubiquitin (a 76-residue protein attached to proteins as an intracellular targeting signal).. In terms of biological role, hydrolase that can remove conjugated ubiquitin from proteins and therefore plays an important regulatory role at the level of protein turnover by preventing degradation. Converts both 'Lys-48' an 'Lys-63'-linked ubiquitin chains. Catalytic activity is enhanced in the M phase. Involved in cell proliferation. Required to enter into S phase in response to serum stimulation. May regulate T-cell anergy mediated by RNF128 via the formation of a complex containing RNF128 and OTUB1. Probably regulates the stability of STAM2 and RASGRF1. Regulates endosomal ubiquitin dynamics, cargo sorting, membrane traffic at early endosomes, and maintenance of ESCRT-0 stability. The level of protein ubiquitination on endosomes is essential for maintaining the morphology of the organelle. Deubiquitinates EPS15 and controls tyrosine kinase stability. Removes conjugated ubiquitin from EGFR thus regulating EGFR degradation and downstream MAPK signaling. Involved in acrosome biogenesis through interaction with the spermatid ESCRT-0 complex and microtubules. Deubiquitinates BIRC6/bruce and KIF23/MKLP1. Deubiquitinates BACE1 which inhibits BACE1 lysosomal degradation and modulates BACE-mediated APP cleavage and amyloid-beta formation. The polypeptide is Ubiquitin carboxyl-terminal hydrolase 8 (Mus musculus (Mouse)).